Consider the following 347-residue polypeptide: Phenylalanine--tRNA ligase alpha subunit (347 aa).

Glu259 provides a ligand contact to Mg(2+).

Belongs to the class-II aminoacyl-tRNA synthetase family. Phe-tRNA synthetase alpha subunit type 1 subfamily. As to quaternary structure, tetramer of two alpha and two beta subunits. Mg(2+) is required as a cofactor.

Its subcellular location is the cytoplasm. The catalysed reaction is tRNA(Phe) + L-phenylalanine + ATP = L-phenylalanyl-tRNA(Phe) + AMP + diphosphate + H(+). This Oenococcus oeni (strain ATCC BAA-331 / PSU-1) protein is Phenylalanine--tRNA ligase alpha subunit.